A 253-amino-acid polypeptide reads, in one-letter code: U2 small nuclear ribonucleoprotein A' (253 aa).

LRR repeat units lie at residues 19–40 (KDRE…GIAK), 41–62 (DQDA…PFFP), 63–84 (RLHT…IAST), and 87–108 (NLTT…DPLR). The LRRCT domain maps to 121 to 159 (NPVTRKEHYRYWVIWRIPSVRFLDYQKVKDAERAKAKEL). The segment at 228-253 (ELNEGRIPGGALDAGEDSEDENQMQT) is disordered. The segment covering 241-253 (AGEDSEDENQMQT) has biased composition (acidic residues).

This sequence belongs to the U2 small nuclear ribonucleoprotein A family. Associated with the spliceosome.

The protein localises to the nucleus. In terms of biological role, involved in pre-mRNA splicing. The protein is U2 small nuclear ribonucleoprotein A' (lea1) of Aspergillus fumigatus (strain ATCC MYA-4609 / CBS 101355 / FGSC A1100 / Af293) (Neosartorya fumigata).